Reading from the N-terminus, the 331-residue chain is Pantothenate kinase (331 aa).

109 to 116 is an ATP binding site; it reads GSVAVGKS.

It belongs to the prokaryotic pantothenate kinase family.

It is found in the cytoplasm. It catalyses the reaction (R)-pantothenate + ATP = (R)-4'-phosphopantothenate + ADP + H(+). It participates in cofactor biosynthesis; coenzyme A biosynthesis; CoA from (R)-pantothenate: step 1/5. This Rhizobium etli (strain CIAT 652) protein is Pantothenate kinase.